Reading from the N-terminus, the 416-residue chain is 2,3-bisphosphoglycerate-independent phosphoglycerate mutase (416 aa).

This sequence belongs to the BPG-independent phosphoglycerate mutase family. A-PGAM subfamily.

The enzyme catalyses (2R)-2-phosphoglycerate = (2R)-3-phosphoglycerate. It functions in the pathway carbohydrate degradation; glycolysis; pyruvate from D-glyceraldehyde 3-phosphate: step 3/5. Functionally, catalyzes the interconversion of 2-phosphoglycerate and 3-phosphoglycerate. The chain is 2,3-bisphosphoglycerate-independent phosphoglycerate mutase from Ignicoccus hospitalis (strain KIN4/I / DSM 18386 / JCM 14125).